Consider the following 148-residue polypeptide: Large ribosomal subunit protein uL15 (148 aa).

Residues 1 to 51 (MNLSSLKPAEGAVKSRKRIGRGPGSGLGGTSTRGHKGAKSRSGYSKKIGFE) form a disordered region. The span at 21–31 (RGPGSGLGGTS) shows a compositional bias: gly residues.

This sequence belongs to the universal ribosomal protein uL15 family. As to quaternary structure, part of the 50S ribosomal subunit.

In terms of biological role, binds to the 23S rRNA. This chain is Large ribosomal subunit protein uL15, found in Porphyromonas gingivalis (strain ATCC 33277 / DSM 20709 / CIP 103683 / JCM 12257 / NCTC 11834 / 2561).